Here is a 189-residue protein sequence, read N- to C-terminus: uncharacterized protein (189 aa).

It belongs to the mimivirus R457/R459 family.

It localises to the virion. This is an uncharacterized protein from Acanthamoeba polyphaga mimivirus (APMV).